Reading from the N-terminus, the 348-residue chain is NADH-ubiquinone oxidoreductase chain 2 (348 aa).

A run of 11 helical transmembrane segments spans residues 1–21 (MMTL…MFSS), 23–43 (WFFA…MMLF), 56–76 (YFIS…WNYF), 92–112 (ITLI…HFWL), 123–143 (MGLI…IQVS), 148–168 (NMYI…FGGL), 176–196 (LLAY…AVSA), 198–218 (LSWV…TILI), 242–262 (CILV…FLKL), 272–292 (SLIL…FFYL), and 321–341 (LLFN…PFMI).

This sequence belongs to the complex I subunit 2 family.

The protein resides in the mitochondrion inner membrane. The catalysed reaction is a ubiquinone + NADH + 5 H(+)(in) = a ubiquinol + NAD(+) + 4 H(+)(out). Core subunit of the mitochondrial membrane respiratory chain NADH dehydrogenase (Complex I) that is believed to belong to the minimal assembly required for catalysis. Complex I functions in the transfer of electrons from NADH to the respiratory chain. The immediate electron acceptor for the enzyme is believed to be ubiquinone. The protein is NADH-ubiquinone oxidoreductase chain 2 (MT-ND2) of Myxine glutinosa (Atlantic hagfish).